Reading from the N-terminus, the 150-residue chain is Protein Turandot X1/X2 (150 aa).

The signal sequence occupies residues 1–22; sequence MRLYIGSLLICVLLGIVPFATA. Positions 127–150 are disordered; it reads REEGQSNHANSPTTSPSRIQKMTK. The segment covering 132–150 has biased composition (polar residues); that stretch reads SNHANSPTTSPSRIQKMTK.

It belongs to the Turandot family.

It localises to the secreted. In terms of biological role, a humoral factor that may play a role in stress tolerance. This chain is Protein Turandot X1/X2, found in Drosophila sechellia (Fruit fly).